The sequence spans 427 residues: Trigger factor (427 aa).

The region spanning 163-248 (GDTVVIDFVG…VNEVKAKELP (86 aa)) is the PPIase FKBP-type domain.

It belongs to the FKBP-type PPIase family. Tig subfamily.

The protein resides in the cytoplasm. It catalyses the reaction [protein]-peptidylproline (omega=180) = [protein]-peptidylproline (omega=0). Its function is as follows. Involved in protein export. Acts as a chaperone by maintaining the newly synthesized protein in an open conformation. Functions as a peptidyl-prolyl cis-trans isomerase. This chain is Trigger factor, found in Lactococcus lactis subsp. cremoris (strain MG1363).